A 164-amino-acid chain; its full sequence is HTH-type transcriptional regulator IscR (164 aa).

An HTH rrf2-type domain is found at 2–131; sequence RLTSKGRYAV…NNITLGELVN (130 aa). Residues 28-51 constitute a DNA-binding region (H-T-H motif); sequence LADISERQGISLSYLEQLFSRLRK. 3 residues coordinate [2Fe-2S] cluster: Cys-92, Cys-98, and Cys-104.

[2Fe-2S] cluster is required as a cofactor.

In terms of biological role, regulates the transcription of several operons and genes involved in the biogenesis of Fe-S clusters and Fe-S-containing proteins. This is HTH-type transcriptional regulator IscR from Salmonella agona (strain SL483).